A 144-amino-acid chain; its full sequence is Mannitol-specific phosphotransferase enzyme IIA component (144 aa).

A PTS EIIA type-2 domain is found at 3–142; sequence ELFSNDNIFL…EEIKQVFEEA (140 aa). Catalysis depends on histidine 63, which acts as the Tele-phosphohistidine intermediate. Position 63 is a phosphohistidine; by HPr (histidine 63).

As to quaternary structure, homodimer or homotrimer. Seems to be a monomer when not phosphorylated.

The protein localises to the cytoplasm. Functionally, the phosphoenolpyruvate-dependent sugar phosphotransferase system (sugar PTS), a major carbohydrate active transport system, catalyzes the phosphorylation of incoming sugar substrates concomitantly with their translocation across the cell membrane. The enzyme II CmtAB PTS system is involved in D-mannitol transport. The protein is Mannitol-specific phosphotransferase enzyme IIA component (mtlF) of Staphylococcus aureus (strain COL).